The sequence spans 404 residues: Probable tRNA sulfurtransferase (404 aa).

The THUMP domain maps to 61-166 (EAVSERLKDV…SGYSYIMCDE (106 aa)). ATP-binding positions include 184-185 (LL), 209-210 (HF), Arg266, Gly288, and Gln297.

It belongs to the ThiI family.

The protein localises to the cytoplasm. It carries out the reaction [ThiI sulfur-carrier protein]-S-sulfanyl-L-cysteine + a uridine in tRNA + 2 reduced [2Fe-2S]-[ferredoxin] + ATP + H(+) = [ThiI sulfur-carrier protein]-L-cysteine + a 4-thiouridine in tRNA + 2 oxidized [2Fe-2S]-[ferredoxin] + AMP + diphosphate. The enzyme catalyses [ThiS sulfur-carrier protein]-C-terminal Gly-Gly-AMP + S-sulfanyl-L-cysteinyl-[cysteine desulfurase] + AH2 = [ThiS sulfur-carrier protein]-C-terminal-Gly-aminoethanethioate + L-cysteinyl-[cysteine desulfurase] + A + AMP + 2 H(+). It functions in the pathway cofactor biosynthesis; thiamine diphosphate biosynthesis. Catalyzes the ATP-dependent transfer of a sulfur to tRNA to produce 4-thiouridine in position 8 of tRNAs, which functions as a near-UV photosensor. Also catalyzes the transfer of sulfur to the sulfur carrier protein ThiS, forming ThiS-thiocarboxylate. This is a step in the synthesis of thiazole, in the thiamine biosynthesis pathway. The sulfur is donated as persulfide by IscS. This is Probable tRNA sulfurtransferase from Bacillus cereus (strain AH187).